A 306-amino-acid polypeptide reads, in one-letter code: Ornithine carbamoyltransferase (306 aa).

Residues 51–54 (STRT), Gln78, Arg102, and 129–132 (HPCQ) each bind carbamoyl phosphate. Residues Asn160, Asp223, and 227–228 (SM) contribute to the L-ornithine site. Residues 263 to 264 (CL) and Arg291 contribute to the carbamoyl phosphate site.

Belongs to the aspartate/ornithine carbamoyltransferase superfamily. OTCase family.

The protein localises to the cytoplasm. It catalyses the reaction carbamoyl phosphate + L-ornithine = L-citrulline + phosphate + H(+). It participates in amino-acid biosynthesis; L-arginine biosynthesis; L-arginine from L-ornithine and carbamoyl phosphate: step 1/3. Its function is as follows. Reversibly catalyzes the transfer of the carbamoyl group from carbamoyl phosphate (CP) to the N(epsilon) atom of ornithine (ORN) to produce L-citrulline. This chain is Ornithine carbamoyltransferase, found in Nostoc sp. (strain PCC 7120 / SAG 25.82 / UTEX 2576).